Reading from the N-terminus, the 90-residue chain is Small ribosomal subunit protein uS15 (90 aa).

It belongs to the universal ribosomal protein uS15 family. As to quaternary structure, part of the 30S ribosomal subunit. Forms a bridge to the 50S subunit in the 70S ribosome, contacting the 23S rRNA.

In terms of biological role, one of the primary rRNA binding proteins, it binds directly to 16S rRNA where it helps nucleate assembly of the platform of the 30S subunit by binding and bridging several RNA helices of the 16S rRNA. Functionally, forms an intersubunit bridge (bridge B4) with the 23S rRNA of the 50S subunit in the ribosome. This chain is Small ribosomal subunit protein uS15, found in Helicobacter pylori (strain HPAG1).